A 439-amino-acid polypeptide reads, in one-letter code: Phthalate 4,5-dioxygenase oxygenase subunit (439 aa).

The 108-residue stretch at tryptophan 27 to alanine 134 folds into the Rieske domain. [2Fe-2S] cluster contacts are provided by cysteine 70, histidine 72, cysteine 89, and histidine 92. Fe cation contacts are provided by histidine 181 and histidine 186.

The protein belongs to the bacterial ring-hydroxylating dioxygenase alpha subunit family. In terms of assembly, this dioxygenase system consists of two proteins: phthalate oxygenase and phthalate oxygenase reductase. Requires [2Fe-2S] cluster as cofactor. Fe cation is required as a cofactor.

The catalysed reaction is phthalate + NADH + O2 + H(+) = cis-4,5-dihydroxycyclohexa-2,6-diene-1,2-dicarboxylate + NAD(+). It functions in the pathway xenobiotic degradation; phthalate degradation; 3,4-dihydroxybenzoate from phthalate: step 1/3. This chain is Phthalate 4,5-dioxygenase oxygenase subunit (pht3), found in Pseudomonas putida (Arthrobacter siderocapsulatus).